The sequence spans 257 residues: Probable septum site-determining protein MinC (257 aa).

The segment covering 123–141 (AVEAAAAPAAEPTPEPGAA) has biased composition (low complexity). The interval 123 to 144 (AVEAAAAPAAEPTPEPGAASQP) is disordered.

It belongs to the MinC family. As to quaternary structure, interacts with MinD and FtsZ.

Cell division inhibitor that blocks the formation of polar Z ring septums. Rapidly oscillates between the poles of the cell to destabilize FtsZ filaments that have formed before they mature into polar Z rings. Prevents FtsZ polymerization. The sequence is that of Probable septum site-determining protein MinC from Burkholderia multivorans (strain ATCC 17616 / 249).